Here is a 371-residue protein sequence, read N- to C-terminus: Alanine racemase (371 aa).

K40 acts as the Proton acceptor; specific for D-alanine in catalysis. An N6-(pyridoxal phosphate)lysine modification is found at K40. Residue R136 coordinates substrate. The active-site Proton acceptor; specific for L-alanine is Y263. M310 serves as a coordination point for substrate.

This sequence belongs to the alanine racemase family. Pyridoxal 5'-phosphate is required as a cofactor.

It catalyses the reaction L-alanine = D-alanine. Its pathway is amino-acid biosynthesis; D-alanine biosynthesis; D-alanine from L-alanine: step 1/1. Functionally, catalyzes the interconversion of L-alanine and D-alanine. May also act on other amino acids. This is Alanine racemase (alr) from Streptococcus mutans serotype c (strain ATCC 700610 / UA159).